A 272-amino-acid polypeptide reads, in one-letter code: tRNA pseudouridine synthase B (272 aa).

The active-site Nucleophile is the aspartate 38.

The protein belongs to the pseudouridine synthase TruB family. Type 1 subfamily.

The catalysed reaction is uridine(55) in tRNA = pseudouridine(55) in tRNA. Functionally, responsible for synthesis of pseudouridine from uracil-55 in the psi GC loop of transfer RNAs. This is tRNA pseudouridine synthase B from Campylobacter jejuni subsp. jejuni serotype O:23/36 (strain 81-176).